We begin with the raw amino-acid sequence, 388 residues long: MSHCKFEQPRHGSLGFLPRKRASRQRGKVKAFPKDDASKPVHLTAFLGYKAGMTHIVRDLDRPGSKMHKREILEAVTIIETPPMVVVGVVGYVETPRGLRSLTTVWAEHLSEEVKRRFYKNWFKSKKKAFTKYAKKYAESTQSINRELERIKKYCSVVRVLAHTQIRKTPLAQKKAHLMEIQVNGGSVADKVEWAREHFEKTVDIKSTFEQNEMIDVIGVTRGKGNEGTTARWGTKRLPRKTHRGLRKVACIGAWHPANVQWTVARAGNAGYMHRTQLNSKIYRIGAGDDAKNASTDFDATEKRITPMGGFVRYGVVENDFVMLNGATPGPVKRVLTLRKSLLTHTSRKALEPVSLKWIDTASKFGHGRFQTPAEAKQFLGTLKKDVA.

Residues 1 to 10 (MSHCKFEQPR) are compositionally biased toward basic and acidic residues. A disordered region spans residues 1-34 (MSHCKFEQPRHGSLGFLPRKRASRQRGKVKAFPK). Over residues 18–31 (PRKRASRQRGKVKA) the composition is skewed to basic residues.

This sequence belongs to the universal ribosomal protein uL3 family. As to quaternary structure, component of the large ribosomal subunit (LSU). Mature yeast ribosomes consist of a small (40S) and a large (60S) subunit. The 40S small subunit contains 1 molecule of ribosomal RNA (18S rRNA) and at least 33 different proteins. The large 60S subunit contains 3 rRNA molecules (25S, 5.8S and 5S rRNA) and at least 46 different proteins. uL3 forms together with ES39L one of the contact sites for the signal recognition particle that targets ribosomes to the endoplasmic reticulum membrane.

It is found in the cytoplasm. Component of the ribosome, a large ribonucleoprotein complex responsible for the synthesis of proteins in the cell. The small ribosomal subunit (SSU) binds messenger RNAs (mRNAs) and translates the encoded message by selecting cognate aminoacyl-transfer RNA (tRNA) molecules. The large subunit (LSU) contains the ribosomal catalytic site termed the peptidyl transferase center (PTC), which catalyzes the formation of peptide bonds, thereby polymerizing the amino acids delivered by tRNAs into a polypeptide chain. The nascent polypeptides leave the ribosome through a tunnel in the LSU and interact with protein factors that function in enzymatic processing, targeting, and the membrane insertion of nascent chains at the exit of the ribosomal tunnel. uL3 plays a role in coordinating processes of accommodating the aminoacyl-tRNA in the PTC. This is Large ribosomal subunit protein uL3B (rpl302) from Schizosaccharomyces pombe (strain 972 / ATCC 24843) (Fission yeast).